A 555-amino-acid chain; its full sequence is Efflux pump FUS6 (555 aa).

A disordered region spans residues 1–23 (MASAKDAQPAPEKSLSSDPQPEP). 5 consecutive transmembrane segments (helical) span residues 31-51 (WLIF…TSII), 67-87 (LYVW…PIFA), 97-117 (SLTL…GGAH), 130-150 (GIGG…MVSI), and 159-179 (IIGG…GAFA). The N-linked (GlcNAc...) asparagine glycan is linked to Asn-181. 3 helical membrane passes run 186 to 206 (WIFY…GLFL), 225 to 245 (WGGS…LSWG), and 253 to 273 (GWQT…FFAY). A glycan (N-linked (GlcNAc...) asparagine) is linked at Asn-291. A run of 6 helical transmembrane segments spans residues 297–317 (LLVI…FLPV), 332–352 (VMLF…GITI), 360–380 (VWHF…TLLD), 393–413 (ILFG…ILAS), 425–445 (AWTF…AAVF), and 501–521 (KVVW…CFFV). A glycan (N-linked (GlcNAc...) asparagine) is linked at Asn-545.

It belongs to the major facilitator superfamily. TCR/Tet family.

The protein resides in the membrane. Functionally, efflux pump; part of the gene cluster that mediates the biosynthesis of the mycotoxin fusarin C. Within the cluster, FUS1, FUS2, FUS8 and FUS9 are sufficient for fusarin production. The other FUS cluster members are not essential for fusarin C biosynthesis. This chain is Efflux pump FUS6, found in Gibberella fujikuroi (strain CBS 195.34 / IMI 58289 / NRRL A-6831) (Bakanae and foot rot disease fungus).